Here is a 28-residue protein sequence, read N- to C-terminus: 3-phytase B (28 aa).

The tract at residues 1-28 (RDPTGCEVDQVIMVKRHGERYPSPSAGK) is disordered. The active-site Nucleophile is H17.

The protein belongs to the histidine acid phosphatase family.

The catalysed reaction is 1D-myo-inositol hexakisphosphate + H2O = 1D-myo-inositol 1,2,4,5,6-pentakisphosphate + phosphate. Its function is as follows. Catalyzes the hydrolysis of inorganic orthophosphate from phytate. In Aspergillus ficuum, this protein is 3-phytase B (phyB).